The following is a 198-amino-acid chain: Ion-translocating oxidoreductase complex subunit B (198 aa).

The tract at residues 1 to 26 (MTTIMIAVLAIALLATLFGAILGFAS) is hydrophobic. The 4Fe-4S domain occupies 32–90 (EADPIVDQIDAILPQTQCGQCGYPGCRPYAEAIANGDSINKCPPGGQATIEKLADLMGV). [4Fe-4S] cluster contacts are provided by Cys49, Cys52, Cys57, Cys73, Cys114, Cys117, Cys120, Cys124, Cys144, Cys147, Cys150, and Cys154. 4Fe-4S ferredoxin-type domains are found at residues 105–134 (KVAFIHEDMCIGCTKCIQACPVDAIVGGTK) and 135–164 (ALHTVIKDECTGCDLCVAPCPTDCIEMIPL).

The protein belongs to the 4Fe4S bacterial-type ferredoxin family. RnfB subfamily. The complex is composed of six subunits: RnfA, RnfB, RnfC, RnfD, RnfE and RnfG. The cofactor is [4Fe-4S] cluster.

The protein localises to the cell inner membrane. Its function is as follows. Part of a membrane-bound complex that couples electron transfer with translocation of ions across the membrane. This Vibrio vulnificus (strain CMCP6) protein is Ion-translocating oxidoreductase complex subunit B.